The following is a 449-amino-acid chain: Tubulin alpha-1C chain (449 aa).

An MREC motif motif is present at residues 1–4; that stretch reads MREC. Q11 is a binding site for GTP. K40 carries the N6-acetyllysine modification. GTP is bound by residues E71, S140, G144, T145, T179, N206, and N228. E71 is a binding site for Mg(2+). Residue E254 is part of the active site. At Y282 the chain carries 3'-nitrotyrosine. Positions 429-449 are disordered; it reads EKDYEEVGADSADGEDEGEEY. A compositionally biased stretch (acidic residues) spans 431-449; sequence DYEEVGADSADGEDEGEEY. Y432 bears the Phosphotyrosine mark. S439 bears the Phosphoserine mark. Y449 is modified (3'-nitrotyrosine).

The protein belongs to the tubulin family. Dimer of alpha and beta chains. A typical microtubule is a hollow water-filled tube with an outer diameter of 25 nm and an inner diameter of 15 nM. Alpha-beta heterodimers associate head-to-tail to form protofilaments running lengthwise along the microtubule wall with the beta-tubulin subunit facing the microtubule plus end conferring a structural polarity. Microtubules usually have 13 protofilaments but different protofilament numbers can be found in some organisms and specialized cells. It depends on Mg(2+) as a cofactor. In terms of processing, some glutamate residues at the C-terminus are polyglutamylated, resulting in polyglutamate chains on the gamma-carboxyl group. Polyglutamylation plays a key role in microtubule severing by spastin (SPAST). SPAST preferentially recognizes and acts on microtubules decorated with short polyglutamate tails: severing activity by SPAST increases as the number of glutamates per tubulin rises from one to eight, but decreases beyond this glutamylation threshold. Glutamylation is also involved in cilia motility. Post-translationally, some glutamate residues at the C-terminus are monoglycylated but not polyglycylated due to the absence of functional TTLL10 in human. Monoglycylation is mainly limited to tubulin incorporated into cilia and flagella axonemes, which is required for their stability and maintenance. Flagella glycylation controls sperm motility. Both polyglutamylation and monoglycylation can coexist on the same protein on adjacent residues, and lowering glycylation levels increases polyglutamylation, and reciprocally. Acetylation of alpha chains at Lys-40 is located inside the microtubule lumen. This modification has been correlated with increased microtubule stability, intracellular transport and ciliary assembly. In terms of processing, methylation of alpha chains at Lys-40 is found in mitotic microtubules and is required for normal mitosis and cytokinesis contributing to genomic stability. Post-translationally, nitration of Tyr-449 is irreversible and interferes with normal dynein intracellular distribution. Undergoes a tyrosination/detyrosination cycle, the cyclic removal and re-addition of a C-terminal tyrosine residue by the enzymes tubulin tyrosine carboxypeptidase (MATCAP1/KIAA0895L, VASH1 or VASH2) and tubulin tyrosine ligase (TTL), respectively. In terms of processing, tyrosination promotes microtubule interaction with CAP-Gly domain-containing proteins such as CLIP1, CLIP2 and DCTN1. Tyrosination regulates the initiation of dynein-dynactin motility via interaction with DCTN1, which brings the dynein-dynactin complex into contact with microtubules. In neurons, tyrosinated tubulins mediate the initiation of retrograde vesicle transport. Post-translationally, detyrosination is involved in metaphase plate congression by guiding chromosomes during mitosis: detyrosination promotes interaction with CENPE, promoting pole-proximal transport of chromosomes toward the equator. Detyrosination increases microtubules-dependent mechanotransduction in dystrophic cardiac and skeletal muscle. In cardiomyocytes, detyrosinated microtubules are required to resist to contractile compression during contraction: detyrosination promotes association with desmin (DES) at force-generating sarcomeres, leading to buckled microtubules and mechanical resistance to contraction.

Its subcellular location is the cytoplasm. It is found in the cytoskeleton. It catalyses the reaction GTP + H2O = GDP + phosphate + H(+). Tubulin is the major constituent of microtubules, a cylinder consisting of laterally associated linear protofilaments composed of alpha- and beta-tubulin heterodimers. Microtubules grow by the addition of GTP-tubulin dimers to the microtubule end, where a stabilizing cap forms. Below the cap, tubulin dimers are in GDP-bound state, owing to GTPase activity of alpha-tubulin. The chain is Tubulin alpha-1C chain (TUBA1C) from Homo sapiens (Human).